A 474-amino-acid polypeptide reads, in one-letter code: Ribosomal RNA small subunit methyltransferase F (474 aa).

S-adenosyl-L-methionine is bound by residues 119–125 (AAAPGSK), E143, D170, and D188. C241 functions as the Nucleophile in the catalytic mechanism.

The protein belongs to the class I-like SAM-binding methyltransferase superfamily. RsmB/NOP family.

It is found in the cytoplasm. The enzyme catalyses cytidine(1407) in 16S rRNA + S-adenosyl-L-methionine = 5-methylcytidine(1407) in 16S rRNA + S-adenosyl-L-homocysteine + H(+). Functionally, specifically methylates the cytosine at position 1407 (m5C1407) of 16S rRNA. This chain is Ribosomal RNA small subunit methyltransferase F, found in Shewanella oneidensis (strain ATCC 700550 / JCM 31522 / CIP 106686 / LMG 19005 / NCIMB 14063 / MR-1).